We begin with the raw amino-acid sequence, 305 residues long: Sulfate adenylyltransferase subunit 2 (305 aa).

It belongs to the PAPS reductase family. CysD subfamily. As to quaternary structure, heterodimer composed of CysD, the smaller subunit, and CysN.

It catalyses the reaction sulfate + ATP + H(+) = adenosine 5'-phosphosulfate + diphosphate. The protein operates within sulfur metabolism; hydrogen sulfide biosynthesis; sulfite from sulfate: step 1/3. With CysN forms the ATP sulfurylase (ATPS) that catalyzes the adenylation of sulfate producing adenosine 5'-phosphosulfate (APS) and diphosphate, the first enzymatic step in sulfur assimilation pathway. APS synthesis involves the formation of a high-energy phosphoric-sulfuric acid anhydride bond driven by GTP hydrolysis by CysN coupled to ATP hydrolysis by CysD. The chain is Sulfate adenylyltransferase subunit 2 from Pseudomonas fluorescens (strain SBW25).